A 366-amino-acid polypeptide reads, in one-letter code: MVPEMSERQEFQASEFAYLLENSSYDYGENETYFCCTSPPCPQDFSLNFDRTFLPVLYSLLFVLGLLGNGVVAVVLLSQRAALSSTDTFLLHLAVADALLVLTLPLWAVDAAIQWVFGSGLCKVAGALFNINFYAGALLLACISFDRYLSIVHATQFYRRGPPARVALTCVAVWGLCLLFALPDFIFLSSHHDNRLNATHCQYNFPQEGRTALRVLQLVAGFLLPLLVMAYCYARILTVLLVSRGQRRLRAMRLVVVVVVAFALCWTPYHLVVLVDTLMDLGALARNCGRESRVDVAKSVTSGMGYMHCCLNPLLYAFVGVKFRERMWVLLMRLGCPDQRGHQRQPSASRRDSSWSETTEASYSGL.

The Extracellular portion of the chain corresponds to 1-55 (MVPEMSERQEFQASEFAYLLENSSYDYGENETYFCCTSPPCPQDFSLNFDRTFLP). N-linked (GlcNAc...) asparagine glycosylation is present at N22. 2 positions are modified to sulfotyrosine: Y25 and Y27. An N-linked (GlcNAc...) asparagine glycan is attached at N30. The chain crosses the membrane as a helical span at residues 56 to 76 (VLYSLLFVLGLLGNGVVAVVL). Residues 77–88 (LSQRAALSSTDT) lie on the Cytoplasmic side of the membrane. A helical transmembrane segment spans residues 89–109 (FLLHLAVADALLVLTLPLWAV). Over 110–124 (DAAIQWVFGSGLCKV) the chain is Extracellular. An intrachain disulfide couples C122 to C201. A helical membrane pass occupies residues 125 to 145 (AGALFNINFYAGALLLACISF). The Cytoplasmic portion of the chain corresponds to 146-167 (DRYLSIVHATQFYRRGPPARVA). The helical transmembrane segment at 168–188 (LTCVAVWGLCLLFALPDFIFL) threads the bilayer. At 189–221 (SSHHDNRLNATHCQYNFPQEGRTALRVLQLVAG) the chain is on the extracellular side. The N-linked (GlcNAc...) asparagine glycan is linked to N197. The helical transmembrane segment at 222 to 242 (FLLPLLVMAYCYARILTVLLV) threads the bilayer. The Cytoplasmic portion of the chain corresponds to 243–254 (SRGQRRLRAMRL). Residues 255–275 (VVVVVVAFALCWTPYHLVVLV) traverse the membrane as a helical segment. The Extracellular portion of the chain corresponds to 276–299 (DTLMDLGALARNCGRESRVDVAKS). Residues 300-320 (VTSGMGYMHCCLNPLLYAFVG) form a helical membrane-spanning segment. The Cytoplasmic segment spans residues 321 to 366 (VKFRERMWVLLMRLGCPDQRGHQRQPSASRRDSSWSETTEASYSGL). The disordered stretch occupies residues 339–366 (QRGHQRQPSASRRDSSWSETTEASYSGL). A compositionally biased stretch (polar residues) spans 355-366 (WSETTEASYSGL).

It belongs to the G-protein coupled receptor 1 family. As to quaternary structure, homomer. Forms heteromers with ACKR4. Interacts with PF4/CXCL4. Sulfation on Tyr-25 and Tyr-27 is essential for CXCL10 binding. Post-translationally, N-glycosylated.

Its subcellular location is the cell membrane. Receptor for the C-X-C chemokine CXCL9, CXCL10 and CXCL11 and mediates the proliferation, survival and angiogenic activity of mesangial cells through a heterotrimeric G-protein signaling pathway. Probably promotes cell chemotaxis response. Binds to CCL21. Upon activation by PF4, induces activated T-lymphocytes migration mediated via downstream Ras/extracellular signal-regulated kinase (ERK) signaling. The chain is C-X-C chemokine receptor type 3 (CXCR3) from Capra hircus (Goat).